Consider the following 233-residue polypeptide: Cytidylate kinase (233 aa).

ATP is bound at residue 15-23 (GPSGAGKST). A compositionally biased stretch (basic and acidic residues) spans 183-201 (RRDEQDSGREHAPLRRADD). Residues 183–202 (RRDEQDSGREHAPLRRADDA) are disordered.

It belongs to the cytidylate kinase family. Type 1 subfamily.

The protein resides in the cytoplasm. The enzyme catalyses CMP + ATP = CDP + ADP. It carries out the reaction dCMP + ATP = dCDP + ADP. The protein is Cytidylate kinase of Geobacter sulfurreducens (strain ATCC 51573 / DSM 12127 / PCA).